We begin with the raw amino-acid sequence, 156 residues long: Small ribosomal subunit protein uS7 (156 aa).

Belongs to the universal ribosomal protein uS7 family. As to quaternary structure, part of the 30S ribosomal subunit. Contacts proteins S9 and S11.

Functionally, one of the primary rRNA binding proteins, it binds directly to 16S rRNA where it nucleates assembly of the head domain of the 30S subunit. Is located at the subunit interface close to the decoding center, probably blocks exit of the E-site tRNA. This Erythrobacter litoralis (strain HTCC2594) protein is Small ribosomal subunit protein uS7.